We begin with the raw amino-acid sequence, 953 residues long: ALS2 C-terminal-like protein (953 aa).

MORN repeat units lie at residues 358–380, 381–403, 409–431, 432–452, 459–479, 483–505, 506–528, and 529–552; these read YEGE…DGRN, HVGN…QASE, YKCH…TDEV, YKGY…SGPQ, YTGH…DGDR, YIGM…AGVC, YQGT…DDSL, and YEGT…NGFT. Residues 796–942 form the VPS9 domain; the sequence is LFPDTQLLEF…IQKEDMRLHR (147 aa).

Homodimer. Forms a heteromeric complex with ALS2. Interacts with ALS2 and RAB5A. In terms of tissue distribution, expressed in heart and kidney.

The protein resides in the cytoplasm. Functionally, acts as a guanine nucleotide exchange factor (GEF) for Rab5 GTPase. Regulates the ALS2-mediated endosome dynamics. This chain is ALS2 C-terminal-like protein (ALS2CL), found in Homo sapiens (Human).